Consider the following 229-residue polypeptide: Glutathione S-transferase 1 (229 aa).

A GST N-terminal domain is found at 2 to 83; it reads SPVKVFGHPM…YILRKYGGTA (82 aa). Glutathione is bound by residues 41-42, 54-55, and 67-68; these read HK, KM, and ES. Residues 93–223 enclose the GST C-terminal domain; sequence GIEELAMVDV…RVCKHMPTEF (131 aa).

This sequence belongs to the GST superfamily. Phi family.

The enzyme catalyses RX + glutathione = an S-substituted glutathione + a halide anion + H(+). Conjugation of reduced glutathione to a wide number of exogenous and endogenous hydrophobic electrophiles. The polypeptide is Glutathione S-transferase 1 (GSTA1) (Triticum aestivum (Wheat)).